Consider the following 323-residue polypeptide: Phosphate acyltransferase (323 aa).

It belongs to the PlsX family. As to quaternary structure, homodimer. Probably interacts with PlsY.

Its subcellular location is the cytoplasm. It catalyses the reaction a fatty acyl-[ACP] + phosphate = an acyl phosphate + holo-[ACP]. Its pathway is lipid metabolism; phospholipid metabolism. Its function is as follows. Catalyzes the reversible formation of acyl-phosphate (acyl-PO(4)) from acyl-[acyl-carrier-protein] (acyl-ACP). This enzyme utilizes acyl-ACP as fatty acyl donor, but not acyl-CoA. The chain is Phosphate acyltransferase from Finegoldia magna (strain ATCC 29328 / DSM 20472 / WAL 2508) (Peptostreptococcus magnus).